A 131-amino-acid polypeptide reads, in one-letter code: UPF0102 protein RALTA_A3032 (131 aa).

The segment covering 1 to 12 (MMRSFKSTQEPS) has biased composition (polar residues). A disordered region spans residues 1 to 21 (MMRSFKSTQEPSRQARGAQAE).

It belongs to the UPF0102 family.

This is UPF0102 protein RALTA_A3032 from Cupriavidus taiwanensis (strain DSM 17343 / BCRC 17206 / CCUG 44338 / CIP 107171 / LMG 19424 / R1) (Ralstonia taiwanensis (strain LMG 19424)).